The following is a 342-amino-acid chain: N-acetyl-gamma-glutamyl-phosphate reductase (342 aa).

The active site involves Cys149.

It belongs to the NAGSA dehydrogenase family. Type 1 subfamily.

The protein localises to the cytoplasm. It carries out the reaction N-acetyl-L-glutamate 5-semialdehyde + phosphate + NADP(+) = N-acetyl-L-glutamyl 5-phosphate + NADPH + H(+). It participates in amino-acid biosynthesis; L-arginine biosynthesis; N(2)-acetyl-L-ornithine from L-glutamate: step 3/4. Functionally, catalyzes the NADPH-dependent reduction of N-acetyl-5-glutamyl phosphate to yield N-acetyl-L-glutamate 5-semialdehyde. The polypeptide is N-acetyl-gamma-glutamyl-phosphate reductase (Nitrosospira multiformis (strain ATCC 25196 / NCIMB 11849 / C 71)).